The chain runs to 736 residues: Oxysterol-binding protein-related protein 9 (736 aa).

A2 is modified (N-acetylalanine). The 98-residue stretch at A2–L99 folds into the PH domain. A disordered region spans residues L209–V368. The segment covering T253–S274 has biased composition (low complexity). Phosphoserine is present on residues S306, S324, S325, S326, and S329. 2 stretches are compositionally biased toward polar residues: residues S314–S329 and T336–S348. S611 carries the phosphoserine modification.

It belongs to the OSBP family. In terms of assembly, heterodimer with OSBPL11. Interacts with OSBPL10.

Its subcellular location is the late endosome membrane. The protein resides in the golgi apparatus. It localises to the trans-Golgi network membrane. It catalyses the reaction a 1,2-diacyl-sn-glycero-3-phospho-(1D-myo-inositol 4-phosphate)(out) + a 1,2-diacyl-sn-glycero-3-phospho-L-serine(in) = a 1,2-diacyl-sn-glycero-3-phospho-(1D-myo-inositol 4-phosphate)(in) + a 1,2-diacyl-sn-glycero-3-phospho-L-serine(out). In terms of biological role, interacts with OSBPL11 to function as lipid transfer proteins. Together they form a heterodimer that localizes at the ER-trans-Golgi membrane contact sites, and exchanges phosphatidylserine (1,2-diacyl-sn-glycero-3-phospho-L-serine, PS) for phosphatidylinositol-4-phosphate (1,2-diacyl-sn-glycero-3-phospho-(1D-myo-inositol 4-phosphate), PI(4)P) between the two organelles, a step that is critical for sphingomyelin synthesis in the Golgi complex. The protein is Oxysterol-binding protein-related protein 9 (Osbpl9) of Mus musculus (Mouse).